Consider the following 383-residue polypeptide: Homoserine O-acetyltransferase (383 aa).

Residues 52-362 (NAILVCHALT…PWGHDAFLLD (311 aa)) enclose the AB hydrolase-1 domain. Catalysis depends on serine 158, which acts as the Nucleophile. Residue arginine 227 participates in substrate binding. Residues aspartate 323 and histidine 356 contribute to the active site. Substrate is bound at residue aspartate 357.

This sequence belongs to the AB hydrolase superfamily. MetX family. Homodimer.

The protein resides in the cytoplasm. It carries out the reaction L-homoserine + acetyl-CoA = O-acetyl-L-homoserine + CoA. Its pathway is amino-acid biosynthesis; L-methionine biosynthesis via de novo pathway; O-acetyl-L-homoserine from L-homoserine: step 1/1. Functionally, transfers an acetyl group from acetyl-CoA to L-homoserine, forming acetyl-L-homoserine. The sequence is that of Homoserine O-acetyltransferase from Symbiobacterium thermophilum (strain DSM 24528 / JCM 14929 / IAM 14863 / T).